Reading from the N-terminus, the 105-residue chain is Phosphoribosyl-ATP pyrophosphatase (105 aa).

Belongs to the PRA-PH family.

The protein localises to the cytoplasm. It carries out the reaction 1-(5-phospho-beta-D-ribosyl)-ATP + H2O = 1-(5-phospho-beta-D-ribosyl)-5'-AMP + diphosphate + H(+). It functions in the pathway amino-acid biosynthesis; L-histidine biosynthesis; L-histidine from 5-phospho-alpha-D-ribose 1-diphosphate: step 2/9. This is Phosphoribosyl-ATP pyrophosphatase from Ruthia magnifica subsp. Calyptogena magnifica.